The primary structure comprises 432 residues: Cyclic GMP-AMP synthase-like receptor (432 aa).

ATP-binding positions include serine 59 and 71 to 73; that span reads EFD. 3 residues coordinate Mg(2+): glutamate 71, aspartate 73, and aspartate 205. GTP is bound by residues aspartate 205 and 255–262; that span reads KQTCSVLE. Residues 259 to 262, lysine 284, and 303 to 307 each bind ATP; these read SVLE and TYALK.

The protein belongs to the mab-21 family. Mg(2+) is required as a cofactor. It depends on Mn(2+) as a cofactor.

It carries out the reaction GTP + ATP = 2',3'-cGAMP + 2 diphosphate. It catalyses the reaction GTP + ATP = pppGp(2'-5')A + diphosphate. The enzyme catalyses pppGp(2'-5')A = 2',3'-cGAMP + diphosphate. Its function is as follows. Nucleotidyltransferase that catalyzes the formation of cyclic GMP-AMP (2',3'-cGAMP) from ATP and GTP and plays a key role in innate immunity. Directly binds some unknown ligand, activating the nucleotidyltransferase activity, leading to synthesis of 2',3'-cGAMP, a second messenger that binds to and activates Sting, thereby triggering the immune response via activation of the NF-kappa-B transcription factor. The sequence is that of Cyclic GMP-AMP synthase-like receptor from Pocillopora damicornis (Cauliflower coral).